Consider the following 368-residue polypeptide: Histidinol-phosphate aminotransferase (368 aa).

Lys224 carries the N6-(pyridoxal phosphate)lysine modification.

The protein belongs to the class-II pyridoxal-phosphate-dependent aminotransferase family. Histidinol-phosphate aminotransferase subfamily. Homodimer. Pyridoxal 5'-phosphate serves as cofactor.

The enzyme catalyses L-histidinol phosphate + 2-oxoglutarate = 3-(imidazol-4-yl)-2-oxopropyl phosphate + L-glutamate. It functions in the pathway amino-acid biosynthesis; L-histidine biosynthesis; L-histidine from 5-phospho-alpha-D-ribose 1-diphosphate: step 7/9. The protein is Histidinol-phosphate aminotransferase of Agrobacterium fabrum (strain C58 / ATCC 33970) (Agrobacterium tumefaciens (strain C58)).